We begin with the raw amino-acid sequence, 310 residues long: Proline iminopeptidase (310 aa).

Residues 33-290 (PVIFLHGGPG…RVVQAGHRAF (258 aa)) enclose the AB hydrolase-1 domain. Ser107 acts as the Nucleophile in catalysis. The active site involves Asp260. The active-site Proton donor is the His287.

Belongs to the peptidase S33 family.

Its subcellular location is the cytoplasm. It catalyses the reaction Release of N-terminal proline from a peptide.. Functionally, specifically catalyzes the removal of N-terminal proline residues from peptides. The chain is Proline iminopeptidase (pip) from Neisseria meningitidis serogroup B (strain ATCC BAA-335 / MC58).